Here is a 192-residue protein sequence, read N- to C-terminus: Cytochrome c oxidase assembly factor 8 (192 aa).

The transit peptide at 1–26 directs the protein to the mitochondrion; the sequence is MAALRPGSRALRRLLCRSFSGGGGVR.

The protein belongs to the COA8 family. In terms of processing, N-terminal mitochondrial targeting sequence is cleaved from the mature protein once in the mitochondrion. Post-translationally, in normal conditions, the cytoplasmic precursor protein is rapidly degraded by the ubiquitination-proteasome system (UPS). Oxidative stress induces protein stabilization and import into mitochondria where it protects COX from degradation. Expressed in atherosclerotic smooth muscle cells (at protein level). Expressed in aorta, brain, heart, kidney, liver, lung and spleen. Isoform 1 is strongly expressed in Kidney. Isoform 2 is strongly expressed in brain.

It is found in the mitochondrion inner membrane. Required for cytochrome c complex (COX) IV assembly and function Protects COX assembly from oxidation-induced degradation, COX being the terminal component of the mitochondrial respiratory chain. In Mus musculus (Mouse), this protein is Cytochrome c oxidase assembly factor 8 (Coa8).